Consider the following 309-residue polypeptide: NADH-cytochrome b5 reductase 1 (309 aa).

The helical transmembrane segment at 30–50 threads the bilayer; that stretch reads FVPYAVALTAILAGLKLFTGG. The FAD-binding FR-type domain maps to 60-165; that stretch reads TEFQEFVLKE…RGPKGAMVYT (106 aa). FAD contacts are provided by residues 145–160 and 171–208; these read TTLKIGDTMKVRGPKG and HIGMIAGGTGITPMLQIIKAVIRNRPRNGGNDTTKLDL.

It belongs to the flavoprotein pyridine nucleotide cytochrome reductase family. Monomer. Component of the 2-(3-amino-3-carboxypropyl)histidine synthase complex composed of dph1, dph2, dph3 and a NADH-dependent reductase, predominantly cbr1. It depends on FAD as a cofactor.

It is found in the mitochondrion outer membrane. The catalysed reaction is 2 Fe(III)-[cytochrome b5] + NADH = 2 Fe(II)-[cytochrome b5] + NAD(+) + H(+). The enzyme catalyses 2 Fe(3+)-[Dph3] + NADH = 2 Fe(2+)-[Dph3] + NAD(+) + H(+). The protein operates within protein modification; peptidyl-diphthamide biosynthesis. Functionally, NADH-dependent reductase for dph3 and cytochrome b5. Required for the first step of diphthamide biosynthesis, a post-translational modification of histidine which occurs in elongation factor 2. Dph1 and dph2 transfer a 3-amino-3-carboxypropyl (ACP) group from S-adenosyl-L-methionine (SAM) to a histidine residue, the reaction is assisted by a reduction system comprising dph3 and a NADH-dependent reductase, predominantly cbr1. By reducing dph3, also involved in the formation of the tRNA wobble base modification mcm5s 2U (5-methoxycarbonylmethyl-2-thiouridine), mediated by the elongator complex. The cytochrome b5/NADH cytochrome b5 reductase electron transfer system supports the catalytic activity of several sterol biosynthetic enzymes. The chain is NADH-cytochrome b5 reductase 1 (cbr1) from Neosartorya fischeri (strain ATCC 1020 / DSM 3700 / CBS 544.65 / FGSC A1164 / JCM 1740 / NRRL 181 / WB 181) (Aspergillus fischerianus).